A 433-amino-acid polypeptide reads, in one-letter code: Oxysterol-binding protein-like protein OBPa (433 aa).

It belongs to the OSBP family.

The chain is Oxysterol-binding protein-like protein OBPa (OBPA) from Candida albicans (strain SC5314 / ATCC MYA-2876) (Yeast).